The chain runs to 83 residues: U15-theraphotoxin-Cg1a (83 aa).

An N-terminal signal peptide occupies residues 1–21 (MKAAILLAFAGLALLSVICHA). The propeptide occupies 22-49 (SENVEQDSFEEVFSAIFAMEDDLKPKER). 3 disulfide bridges follow: cysteine 51-cysteine 66, cysteine 58-cysteine 71, and cysteine 65-cysteine 77. At alanine 81 the chain carries Alanine amide.

The protein belongs to the neurotoxin 10 (Hwtx-1) family. 66 (Jztx-24) subfamily. Expressed by the venom gland.

It localises to the secreted. Probable ion channel inhibitor. This Chilobrachys guangxiensis (Chinese earth tiger tarantula) protein is U15-theraphotoxin-Cg1a.